A 325-amino-acid polypeptide reads, in one-letter code: tRNA N6-adenosine threonylcarbamoyltransferase (325 aa).

Fe cation is bound by residues histidine 107, histidine 111, and tyrosine 127. Residues 127–131 (YVSGG), aspartate 159, glycine 172, glutamate 176, and asparagine 257 each bind substrate. Aspartate 285 contacts Fe cation.

The protein belongs to the KAE1 / TsaD family. As to quaternary structure, monomer. Component of the KEOPS complex that consists of Kae1, Bud32, Cgi121 and Pcc1; the whole complex dimerizes. The cofactor is Fe(2+).

The protein resides in the cytoplasm. The enzyme catalyses L-threonylcarbamoyladenylate + adenosine(37) in tRNA = N(6)-L-threonylcarbamoyladenosine(37) in tRNA + AMP + H(+). In terms of biological role, required for the formation of a threonylcarbamoyl group on adenosine at position 37 (t(6)A37) in tRNAs that read codons beginning with adenine. Is a component of the KEOPS complex that is probably involved in the transfer of the threonylcarbamoyl moiety of threonylcarbamoyl-AMP (TC-AMP) to the N6 group of A37. Kae1 likely plays a direct catalytic role in this reaction, but requires other protein(s) of the complex to fulfill this activity. The chain is tRNA N6-adenosine threonylcarbamoyltransferase from Thermococcus kodakarensis (strain ATCC BAA-918 / JCM 12380 / KOD1) (Pyrococcus kodakaraensis (strain KOD1)).